The primary structure comprises 426 residues: Phosphomethylpyrimidine synthase (426 aa).

Substrate-binding positions include Asn65, Met94, Tyr123, His162, 184-186 (SRG), 225-228 (DGMR), and Glu264. His268 provides a ligand contact to Zn(2+). Substrate is bound at residue Tyr291. His332 provides a ligand contact to Zn(2+). [4Fe-4S] cluster is bound by residues Cys408, Cys411, and Cys415.

It belongs to the ThiC family. [4Fe-4S] cluster is required as a cofactor.

It catalyses the reaction 5-amino-1-(5-phospho-beta-D-ribosyl)imidazole + S-adenosyl-L-methionine = 4-amino-2-methyl-5-(phosphooxymethyl)pyrimidine + CO + 5'-deoxyadenosine + formate + L-methionine + 3 H(+). Its pathway is cofactor biosynthesis; thiamine diphosphate biosynthesis. Its function is as follows. Catalyzes the synthesis of the hydroxymethylpyrimidine phosphate (HMP-P) moiety of thiamine from aminoimidazole ribotide (AIR) in a radical S-adenosyl-L-methionine (SAM)-dependent reaction. This Methanococcus maripaludis (strain C6 / ATCC BAA-1332) protein is Phosphomethylpyrimidine synthase.